We begin with the raw amino-acid sequence, 1061 residues long: Lysine-specific demethylase jmjd-3.1 (1061 aa).

2 disordered regions span residues 30–49 and 256–417; these read VKNSQETPPFPGMNSTMRPV and KSLS…KRRT. Residues 271 to 287 show a composition bias toward polar residues; the sequence is QHTNSVGSSIGTTSGDS. Residues 310-320 show a composition bias toward low complexity; that stretch reads STSSEFTETTS. Over residues 321 to 330 the composition is skewed to polar residues; that stretch reads VANQTESNAG. The tract at residues 369–417 is required for nuclear localization; the sequence is KKKEQSATEPPIPRTKRAYTKNPNTIRKRRMKKNQSDDEEDDGPPKRRT. Residues 418–759 are required for binding of unc-3 and for function in Y-to-PDA transdifferentiation; sequence INYQIEFRDA…FGTNIDLLSE (342 aa). The JmjC domain maps to 760 to 923; it reads NFKKQMNEIE…LATSIVAHDH (164 aa). Residues His-811, Glu-813, and His-891 each coordinate Fe cation. Residues Cys-998, Cys-1001, Cys-1025, and Cys-1028 each coordinate Zn(2+).

This sequence belongs to the UTX family. As to quaternary structure, interacts with wdr-5.1 and unc-3. Fe(2+) serves as cofactor. As to expression, mainly expressed in head and tail.

Its subcellular location is the nucleus. Histone demethylase that specifically demethylates trimethylated 'Lys-27' of histone H3, a mark associated with transcriptional repression, thereby playing a central role in the histone code. Involved in the transcriptional regulation of the heat shock response, unfolded protein response and possibly other stress response target genes. Required for gonad development and organization. Required for the robust transdifferentiation of the Y rectal epithelial cell to the PDA motor neuron during larval development. Acts cell-autonomously in Y-to-PDA transdifferentiation, which depends on the demethylase activity and on recognition of the H3 tail. Cooperates with set-2 and unc-3 to ensure robust Y-to-PDA transdifferentiation. Promotes mitochondrial stress-induced longevity. Involved in lifespan regulation. The chain is Lysine-specific demethylase jmjd-3.1 from Caenorhabditis elegans.